The sequence spans 493 residues: MNHILAIDQGTTSSRAMVFDEALTLKSVAQEEFPQIYPRPGWVEHDPSDLWSSVAATARAAVERAEIDGSLAAIGITNQRETVVVWERASGHPIHNAIVWQDRRTADLCHALAEAGHEPTITERTGLLLDPYFSATKLKWLLDHVEGARARARRGELLFGTVDSYLIWKLTGGRAHVTDATNAARTMLFDIGRGIWDPEICGLLDIPMEMLPEVKDCAALFGMTRADLFGREIPILGVAGDQQAATCGQACFRPGMMKSTYGTGCFALLNTGEERVTSRARLLTTIAYQLGGKRTYALEGSIFIAGAVVQWLRDGLKIIREAGETQGLALSSDAAQDLVIVPAFTGLGAPWWKPESRGAVFGLTRNSGPAEFARAALESVGYQTRDLLEAMRADWAAGAEGVLRVDGGMAASDWSMQFLADIIGAPVDRPVVRETTALGVAWLAGMQAGLCPGPEEFAADWALERRFEPQMEASVREAKYDRWGRAVRAVMAV.

Position 11 (Thr11) interacts with ADP. ATP-binding residues include Thr11, Thr12, and Ser13. Sn-glycerol 3-phosphate is bound at residue Thr11. Residue Arg15 participates in ADP binding. Sn-glycerol 3-phosphate contacts are provided by Arg80, Glu81, Tyr132, and Asp241. Glycerol contacts are provided by Arg80, Glu81, Tyr132, Asp241, and Gln242. 2 residues coordinate ADP: Thr263 and Gly306. Positions 263, 306, 310, and 408 each coordinate ATP. Gly408 provides a ligand contact to ADP.

It belongs to the FGGY kinase family.

The catalysed reaction is glycerol + ATP = sn-glycerol 3-phosphate + ADP + H(+). The protein operates within polyol metabolism; glycerol degradation via glycerol kinase pathway; sn-glycerol 3-phosphate from glycerol: step 1/1. Inhibited by fructose 1,6-bisphosphate (FBP). Key enzyme in the regulation of glycerol uptake and metabolism. Catalyzes the phosphorylation of glycerol to yield sn-glycerol 3-phosphate. The sequence is that of Glycerol kinase from Cereibacter sphaeroides (strain KD131 / KCTC 12085) (Rhodobacter sphaeroides).